The sequence spans 267 residues: MEGSVGKVGGLGRTLCVLTGASRGFGRTLAQVLAPLMSPRSVLVLSARNDEALRQLETELGAEWPGLRIVRVPADLGAETGLQQLVGALCDLPRPEGLQRVLLINNAGTLGDVSKRWVDLTDPTEVNNYWTLNLTSTLCLTSSILQAFPDSPGLSRTVVNISSICALQPFKGWGLYCAGKAARNMMFQVLAAEEPSVRVLSYGPGPLDTDMQQLARETSVDPDLRKSLQELKRKGELVDCKISAQKLLSLLQNDKFESGAHIDFYDE.

M1 carries the N-acetylmethionine modification. 20-26 (GASRGFG) is a binding site for NADP(+). The residue at position 38 (S38) is a Phosphoserine. NADP(+) contacts are provided by residues 48 to 49 (RN) and 75 to 76 (DL). Residues 163–164 (SI) and Y176 each bind substrate. An NADP(+)-binding site is contributed by K180. S201 carries the post-translational modification Phosphoserine. Residue G205 coordinates substrate. 207 to 212 (LDTDMQ) serves as a coordination point for NADP(+). The residue at position 219 (S219) is a Phosphoserine. D263 provides a ligand contact to substrate.

It belongs to the sepiapterin reductase family. As to quaternary structure, homodimer.

It localises to the cytoplasm. It catalyses the reaction L-erythro-7,8-dihydrobiopterin + NADP(+) = L-sepiapterin + NADPH + H(+). It carries out the reaction (6R)-L-erythro-5,6,7,8-tetrahydrobiopterin + 2 NADP(+) = 6-pyruvoyl-5,6,7,8-tetrahydropterin + 2 NADPH + 2 H(+). Catalyzes the final one or two reductions in tetra-hydrobiopterin biosynthesis to form 5,6,7,8-tetrahydrobiopterin. This Bos taurus (Bovine) protein is Sepiapterin reductase (SPR).